The primary structure comprises 362 residues: Porin Omp2b (362 aa).

Positions 1–22 are cleaved as a signal peptide; that stretch reads MNIKSLLLGSAAALVAASGAQA.

It belongs to the alphaproteobacteria porin family. In terms of assembly, homotrimer.

It localises to the cell outer membrane. Forms passive diffusion pores that allow small molecular weight hydrophilic materials across the outer membrane. The polypeptide is Porin Omp2b (omp2b) (Brucella canis (strain ATCC 23365 / NCTC 10854 / RM-666)).